Consider the following 987-residue polypeptide: Sarcosine oxidase subunit alpha (987 aa).

The NAD(+) site is built by D198, E199, S206, A244, and G445. (6R)-5,10-methylene-5,6,7,8-tetrahydrofolate-binding residues include T714 and E806.

The protein belongs to the GcvT family. As to quaternary structure, heterotetramer composed of subunits alpha (SoxA), beta (SoxB), gamma (SoxG) and delta (SoxD). It depends on NAD(+) as a cofactor.

It is found in the cytoplasm. The enzyme catalyses sarcosine + (6S)-5,6,7,8-tetrahydrofolate + O2 = (6R)-5,10-methylene-5,6,7,8-tetrahydrofolate + glycine + H2O2. The catalysed reaction is sarcosine + O2 + H2O = formaldehyde + glycine + H2O2. Its function is as follows. In the presence of tetrahydrofolate, catalyzes the oxidative demethylation of sarcosine to yield glycine, 5,10-methylenetetrahydrofolate and hydrogen peroxide. In the absence of tetrahydrofolate, catalyzes the oxidative demethylation of sarcosine to yield glycine, formaldehyde and hydrogen peroxide. The polypeptide is Sarcosine oxidase subunit alpha (soxA) (Rhizobium meliloti (strain 1021) (Ensifer meliloti)).